A 75-amino-acid polypeptide reads, in one-letter code: MARYFRRRKFCRFTAEGVQEIDYKDIAVLKNYITESGKIVPSRITGTRAKYQRQLSRAIKRARYLALLPYTDQHR.

It belongs to the bacterial ribosomal protein bS18 family. As to quaternary structure, part of the 30S ribosomal subunit. Forms a tight heterodimer with protein bS6.

Functionally, binds as a heterodimer with protein bS6 to the central domain of the 16S rRNA, where it helps stabilize the platform of the 30S subunit. The polypeptide is Small ribosomal subunit protein bS18 (Buchnera aphidicola subsp. Acyrthosiphon pisum (strain 5A)).